The chain runs to 432 residues: Phosphomethylpyrimidine synthase (432 aa).

Substrate is bound by residues Asn-66, Met-95, Tyr-124, His-163, 185–187 (SRG), 226–229 (DGLR), and Glu-265. His-269 provides a ligand contact to Zn(2+). Tyr-292 serves as a coordination point for substrate. His-333 serves as a coordination point for Zn(2+). Residues Cys-409, Cys-412, and Cys-416 each contribute to the [4Fe-4S] cluster site.

The protein belongs to the ThiC family. It depends on [4Fe-4S] cluster as a cofactor.

It carries out the reaction 5-amino-1-(5-phospho-beta-D-ribosyl)imidazole + S-adenosyl-L-methionine = 4-amino-2-methyl-5-(phosphooxymethyl)pyrimidine + CO + 5'-deoxyadenosine + formate + L-methionine + 3 H(+). Its pathway is cofactor biosynthesis; thiamine diphosphate biosynthesis. In terms of biological role, catalyzes the synthesis of the hydroxymethylpyrimidine phosphate (HMP-P) moiety of thiamine from aminoimidazole ribotide (AIR) in a radical S-adenosyl-L-methionine (SAM)-dependent reaction. The sequence is that of Phosphomethylpyrimidine synthase from Thermoanaerobacter sp. (strain X514).